A 196-amino-acid chain; its full sequence is CRISPR-associated exonuclease Cas4 (196 aa).

Cysteine 23 serves as a coordination point for [4Fe-4S] cluster. Mn(2+) contacts are provided by histidine 50, aspartate 90, and glutamate 103. 3 residues coordinate [4Fe-4S] cluster: cysteine 184, cysteine 187, and cysteine 193.

Belongs to the CRISPR-associated exonuclease Cas4 family. Mg(2+) is required as a cofactor. [4Fe-4S] cluster serves as cofactor.

The enzyme catalyses exonucleolytic cleavage in the 5'- to 3'-direction to yield nucleoside 3'-phosphates.. CRISPR (clustered regularly interspaced short palindromic repeat) is an adaptive immune system that provides protection against mobile genetic elements (viruses, transposable elements and conjugative plasmids). CRISPR clusters contain sequences complementary to antecedent mobile elements and target invading nucleic acids. CRISPR clusters are transcribed and processed into CRISPR RNA (crRNA). This may be a 5' to 3' ssDNA exonuclease. This is CRISPR-associated exonuclease Cas4 from Francisella tularensis subsp. novicida (strain U112).